The sequence spans 799 residues: E3 UFM1-protein ligase 1 homolog (799 aa).

Residues 429 to 483 (TTTTTTTQPSKKKDNLINSDDDDNQDNNKKSSKGKNKKSKQQQSSIQKLINDSED) form a disordered region. The segment covering 458-468 (KSSKGKNKKSK) has biased composition (basic residues). The span at 469–478 (QQQSSIQKLI) shows a compositional bias: low complexity.

This sequence belongs to the UFL1 family.

Functionally, E3 UFM1-protein ligase that mediates ufmylation of target proteins. This Dictyostelium discoideum (Social amoeba) protein is E3 UFM1-protein ligase 1 homolog.